The chain runs to 251 residues: uncharacterized protein (251 aa).

It to M.jannaschii MJ0638 and MJ1123 and M.tuberculosis Rv2003c.

This is an uncharacterized protein from Methanocaldococcus jannaschii (strain ATCC 43067 / DSM 2661 / JAL-1 / JCM 10045 / NBRC 100440) (Methanococcus jannaschii).